The following is a 25-amino-acid chain: Neuromedin-U-25 (25 aa).

Residue Asn25 is modified to Asparagine amide.

Belongs to the NmU family.

The protein localises to the secreted. Stimulates uterine smooth muscle contraction and causes selective vasoconstriction. This is Neuromedin-U-25 from Rana temporaria (European common frog).